We begin with the raw amino-acid sequence, 376 residues long: 23S rRNA (uracil(747)-C(5))-methyltransferase RlmC (376 aa).

[4Fe-4S] cluster is bound by residues Cys3, Cys11, Cys14, and Cys87. 4 residues coordinate S-adenosyl-L-methionine: Gln212, Phe241, Glu262, and Asn307. Residue Cys334 is the Nucleophile of the active site.

Belongs to the class I-like SAM-binding methyltransferase superfamily. RNA M5U methyltransferase family. RlmC subfamily.

It catalyses the reaction uridine(747) in 23S rRNA + S-adenosyl-L-methionine = 5-methyluridine(747) in 23S rRNA + S-adenosyl-L-homocysteine + H(+). In terms of biological role, catalyzes the formation of 5-methyl-uridine at position 747 (m5U747) in 23S rRNA. The protein is 23S rRNA (uracil(747)-C(5))-methyltransferase RlmC of Pectobacterium carotovorum subsp. carotovorum (strain PC1).